The following is a 927-amino-acid chain: MNPLSAVFNSVVLVLLALGVTDVFFSYESSRCSMTYMFEYPQYLQIKLSKKVSRLYPLYELYLYGEGSYAEENKNLTLTGVPVLFLPGNAGSYKQARSFASVALRKAENIGNRYHFNIFTVNFNEELVALYGGSLRRQTRFVHECIKTILSLYKNQTFPPESVAIIGHSMGGLVARALFTLKHFKPDLINVIITQATPHILPVLSTDIYLTDFYTMVNNYWIYNSLKLRNITMLSVAGGYSDYQVRSGLTFLPTSSFHTSALSVVSSAVPITWASTDHLSIVWCRELVLVTARALFDLIDEHTKQINIDPQSRMSVIKHHFVRHPAKHLESRHQITASFTETPKFTLVEDSKWTYTVNKESNESFFLFPLLDKRIAYSHFHCQNTFLYTHSWIFGCNKTVSPKCLQINDLSWETELLPSAKVVNLKLDVYSNLSHFILYIPATNGSKFSVECEFLSEEARTVHVPVTHVLSFGFSSSHAPLNSSGLLYVIQFEDFSKIYQAFNVFIVRNCGQNKESKSSIYKFHVPWSHEDLIGVLSDELPVRISAKLHAEQPQNDNRLVKLFLYASPECLHEVTISTSFSQILGQIVRFHGIYLPVYIVANLLLAYGAQLHSILIQGSCMDLDLSFDVAAKPYKVDPVLIICKYLLNYKWFKNYWDGLMLPQLDAVQLHAYGFWFPLASLFFFIFGTSIAYWSSIGLQAAVRILSSLWIYLKRPSMFPKESKCITYRVYAETLFFAFISWRSCGTFSLLLVFLRYLSKVLILYSSMKNYVSLNAHIVKDTSSKQDSVKTDSDTNINSNQLTHHQPSSLEIKALDDCLKMHFTILHLNLWIVLLGLPSFIYWLKTLRYTIQLDPDPNRVSALVLIFILEILMNSTTSAIKSSVCLKTAAVLQLPLSIIVVAFGTLHLYRISNLIAFSLFLHVVCCFV.

The Cytoplasmic portion of the chain corresponds to 1–4 (MNPL). A helical membrane pass occupies residues 5–25 (SAVFNSVVLVLLALGVTDVFF). Over 26–595 (SYESSRCSMT…QIVRFHGIYL (570 aa)) the chain is Lumenal. Asparagine 75 and asparagine 155 each carry an N-linked (GlcNAc...) asparagine glycan. Serine 169 is a catalytic residue. Residues asparagine 230, asparagine 362, asparagine 397, asparagine 432, asparagine 444, and asparagine 482 are each glycosylated (N-linked (GlcNAc...) asparagine). A helical membrane pass occupies residues 596–616 (PVYIVANLLLAYGAQLHSILI). Over 617 to 672 (QGSCMDLDLSFDVAAKPYKVDPVLIICKYLLNYKWFKNYWDGLMLPQLDAVQLHAY) the chain is Cytoplasmic. A helical transmembrane segment spans residues 673–693 (GFWFPLASLFFFIFGTSIAYW). Residues 694-733 (SSIGLQAAVRILSSLWIYLKRPSMFPKESKCITYRVYAET) lie on the Lumenal side of the membrane. A helical transmembrane segment spans residues 734–754 (LFFAFISWRSCGTFSLLLVFL). The Cytoplasmic segment spans residues 755–821 (RYLSKVLILY…KALDDCLKMH (67 aa)). A helical transmembrane segment spans residues 822 to 842 (FTILHLNLWIVLLGLPSFIYW). Residues 843 to 858 (LKTLRYTIQLDPDPNR) lie on the Lumenal side of the membrane. Residues 859 to 879 (VSALVLIFILEILMNSTTSAI) form a helical membrane-spanning segment. The Cytoplasmic segment spans residues 880–887 (KSSVCLKT). The helical transmembrane segment at 888–908 (AAVLQLPLSIIVVAFGTLHLY) threads the bilayer. Over 909-927 (RISNLIAFSLFLHVVCCFV) the chain is Lumenal.

The protein belongs to the GPI inositol-deacylase family.

It is found in the endoplasmic reticulum membrane. GPI inositol-deacylase that catalyzes the remove of the acyl chain linked to the 2-OH position of inositol ring from the GPI-anchored protein (GPI-AP) in the endoplasmic reticulum. Initiates the post-attachment remodeling phase of GPI-AP biogenesis and participates in endoplasmic reticulum (ER)-to-Golgi transport of GPI-anchored protein. The chain is GPI inositol-deacylase from Xenopus laevis (African clawed frog).